Consider the following 205-residue polypeptide: MALRTKNPNRQKTEAIESIKNDVKASSAFIFTEYRGLKVEQITELRKKLRENACTYKVVRNNFARIAFEDADIKDVDSWLTGPTALAMIAEDANLAAKTLFEYAKDAPALVIKGAVVDGEIYDAKQIEAFSKLPGKKDLIAMFMSTVNATTSKFVRTLQAIVDKGGAQGAAPAEAKAEAPASEEKAADTPAEQPAESAPEAAPEA.

Residues A167 to A205 are disordered. Low complexity-rich tracts occupy residues G169–P180 and P190–A205.

The protein belongs to the universal ribosomal protein uL10 family. Part of the ribosomal stalk of the 50S ribosomal subunit. The N-terminus interacts with L11 and the large rRNA to form the base of the stalk. The C-terminus forms an elongated spine to which L12 dimers bind in a sequential fashion forming a multimeric L10(L12)X complex.

In terms of biological role, forms part of the ribosomal stalk, playing a central role in the interaction of the ribosome with GTP-bound translation factors. The sequence is that of Large ribosomal subunit protein uL10 from Treponema denticola (strain ATCC 35405 / DSM 14222 / CIP 103919 / JCM 8153 / KCTC 15104).